The sequence spans 228 residues: RNA chaperone ProQ (228 aa).

A disordered region spans residues 105–178 (EAKARVQAQR…REEQHTPVSD (74 aa)). Composition is skewed to basic and acidic residues over residues 117-136 (QQAKKREAAAAAGEKEDAPR) and 146-173 (RRKETTPRTPRAEKPAAKAPRAPREEQH).

The protein belongs to the ProQ family.

It is found in the cytoplasm. RNA chaperone with significant RNA binding, RNA strand exchange and RNA duplexing activities. May regulate ProP activity through an RNA-based, post-transcriptional mechanism. In Citrobacter koseri (strain ATCC BAA-895 / CDC 4225-83 / SGSC4696), this protein is RNA chaperone ProQ.